The following is a 439-amino-acid chain: C4-dicarboxylate transport protein 1 (439 aa).

6 consecutive transmembrane segments (helical) span residues 18 to 38, 56 to 76, 91 to 111, 157 to 177, 193 to 213, and 231 to 251; these read VLYIQVLVAIVLGVIVGWLWP, LIKMVIAPVIFCTVVSGIAHV, IYFEIVSTFALALGLIVANVI, GEILQVLLFSILFGIALMSLG, AIFGVIAIVVKAAPIGAFGAM, and LIATFYLTALAFVIIVLGIIA.

This sequence belongs to the dicarboxylate/amino acid:cation symporter (DAACS) (TC 2.A.23) family.

It is found in the cell inner membrane. In terms of biological role, responsible for the transport of dicarboxylates such as succinate, fumarate, and malate from the periplasm across the membrane. The chain is C4-dicarboxylate transport protein 1 from Bradyrhizobium sp. (strain ORS 278).